We begin with the raw amino-acid sequence, 166 residues long: PTS system glucose-specific EIIA component (166 aa).

Residues 34-138 (DPVFAQKMMG…SVISPIIITN (105 aa)) enclose the PTS EIIA type-1 domain. Zn(2+) contacts are provided by H71 and H86. Residue H86 is the Tele-phosphohistidine intermediate; for EIIA activity of the active site. H86 is subject to Phosphohistidine; by HPr.

As to quaternary structure, heterodimer with glycerol kinase (glpk). Zn(2+) serves as cofactor.

It is found in the cytoplasm. Its function is as follows. The phosphoenolpyruvate-dependent sugar phosphotransferase system (sugar PTS), a major carbohydrate active transport system, catalyzes the phosphorylation of incoming sugar substrates concomitantly with their translocation across the cell membrane. The enzyme II complex composed of PtsG and Crr is involved in glucose transport. The polypeptide is PTS system glucose-specific EIIA component (crr) (Staphylococcus aureus (strain Mu50 / ATCC 700699)).